A 658-amino-acid chain; its full sequence is Probable rhamnogalacturonate lyase B (658 aa).

The N-terminal stretch at 1–19 (MRFAIPLGAACAWAGVALA) is a signal peptide. 10 N-linked (GlcNAc...) asparagine glycosylation sites follow: asparagine 110, asparagine 143, asparagine 239, asparagine 280, asparagine 522, asparagine 530, asparagine 564, asparagine 571, asparagine 592, and asparagine 633.

It belongs to the polysaccharide lyase 4 family.

It is found in the secreted. It catalyses the reaction Endotype eliminative cleavage of L-alpha-rhamnopyranosyl-(1-&gt;4)-alpha-D-galactopyranosyluronic acid bonds of rhamnogalacturonan I domains in ramified hairy regions of pectin leaving L-rhamnopyranose at the reducing end and 4-deoxy-4,5-unsaturated D-galactopyranosyluronic acid at the non-reducing end.. Functionally, pectinolytic enzymes consist of four classes of enzymes: pectin lyase, polygalacturonase, pectin methylesterase and rhamnogalacturonase. Degrades the rhamnogalacturonan I (RG-I) backbone of pectin. The sequence is that of Probable rhamnogalacturonate lyase B (rglB) from Neosartorya fischeri (strain ATCC 1020 / DSM 3700 / CBS 544.65 / FGSC A1164 / JCM 1740 / NRRL 181 / WB 181) (Aspergillus fischerianus).